A 301-amino-acid polypeptide reads, in one-letter code: MKRKVLLMGRSESGKTSMRSIIFANYIARDTMRLGVTIDVEHSHVRFLGNLVLNLWDCGGQEGFLESYLTTQRDHIFRNVEVLIYVFDIESREHQKDIKNYKSCIEAISQNSKDAKIFCLIHKMDLVPEDQRDTLFKNKEQEIRQASLPLKPTCFRTSIWDETLYKAWSSIVYSLIPNVKVLEYNLDKFCKICEADEVVLFEKATFLVISHSARKVHKDVHRFEKISTIIKQFFLSCSKSQANFQAMEVRNSNFAAFIDAFTSNTYIMVIMSDPTIESSATLLNIQVAKSHFEKFINSTSN.

GTP-binding positions include 9–16 (GRSESGKT), 57–61 (DCGGQ), and 122–125 (HKMD).

Belongs to the GTR/RAG GTP-binding protein family.

The protein resides in the cytoplasm. It is found in the nucleus. The protein localises to the lysosome. In terms of biological role, guanine nucleotide-binding protein that plays a crucial role in the cellular response to amino acid availability through regulation of the TOR signaling cascade. The protein is Ras-related GTP-binding protein A (ragA) of Dictyostelium discoideum (Social amoeba).